The sequence spans 98 residues: DNA-binding protein Fis (98 aa).

The segment at residues 74-93 (QTRAAQMMGINRGTLRKKLK) is a DNA-binding region (H-T-H motif).

It belongs to the transcriptional regulatory Fis family. Homodimer.

Activates ribosomal RNA transcription. Plays a direct role in upstream activation of rRNA promoters. The sequence is that of DNA-binding protein Fis from Proteus hauseri.